We begin with the raw amino-acid sequence, 196 residues long: Inosine triphosphate pyrophosphatase 1 (196 aa).

20 to 25 is a binding site for ITP; that stretch reads TGNDGK. A Mg(2+)-binding site is contributed by glutamate 48. Residues lysine 61, 77–78, lysine 94, 153–156, lysine 177, and 182–183 contribute to the ITP site; these read DT, FGWD, and PR.

Belongs to the HAM1 NTPase family. In terms of assembly, homodimer. The cofactor is Mg(2+). It depends on Mn(2+) as a cofactor.

The protein localises to the cytoplasm. The enzyme catalyses ITP + H2O = IMP + diphosphate + H(+). It catalyses the reaction dITP + H2O = dIMP + diphosphate + H(+). It carries out the reaction XTP + H2O = XMP + diphosphate + H(+). Functionally, pyrophosphatase that hydrolyzes non-canonical purine nucleotides such as inosine triphosphate (ITP), deoxyinosine triphosphate (dITP) or xanthosine 5'-triphosphate (XTP) to their respective monophosphate derivatives. The enzyme does not distinguish between the deoxy- and ribose forms. Probably excludes non-canonical purines from RNA and DNA precursor pools, thus preventing their incorporation into RNA and DNA and avoiding chromosomal lesions. The polypeptide is Inosine triphosphate pyrophosphatase 1 (Trypanosoma cruzi (strain CL Brener)).